A 285-amino-acid polypeptide reads, in one-letter code: Isoprenyl transferase 2 (285 aa).

The segment at 11 to 30 (RREYRAPEPHPSGARAPKLP) is disordered. The active site involves Asp-43. Asp-43 is a binding site for Mg(2+). Substrate is bound by residues 44–47 (GNGR), Trp-48, Arg-56, His-60, and 88–90 (STE). The Proton acceptor role is filled by Asn-91. Residues Trp-92, Arg-94, Arg-211, and 217-219 (RTS) contribute to the substrate site. Mg(2+) is bound at residue Glu-230.

Belongs to the UPP synthase family. In terms of assembly, homodimer. The cofactor is Mg(2+).

Its function is as follows. Catalyzes the condensation of isopentenyl diphosphate (IPP) with allylic pyrophosphates generating different type of terpenoids. In Streptomyces avermitilis (strain ATCC 31267 / DSM 46492 / JCM 5070 / NBRC 14893 / NCIMB 12804 / NRRL 8165 / MA-4680), this protein is Isoprenyl transferase 2.